A 397-amino-acid polypeptide reads, in one-letter code: Acetate kinase 2 (397 aa).

Asparagine 10 contributes to the Mg(2+) binding site. Lysine 17 lines the ATP pocket. Arginine 90 serves as a coordination point for substrate. The active-site Proton donor/acceptor is aspartate 147. ATP is bound by residues histidine 207–glycine 211, aspartate 281–arginine 283, and glycine 329–asparagine 333. Glutamate 385 lines the Mg(2+) pocket.

It belongs to the acetokinase family. In terms of assembly, homodimer. The cofactor is Mg(2+). Mn(2+) is required as a cofactor.

It localises to the cytoplasm. The enzyme catalyses acetate + ATP = acetyl phosphate + ADP. It functions in the pathway metabolic intermediate biosynthesis; acetyl-CoA biosynthesis; acetyl-CoA from acetate: step 1/2. In terms of biological role, catalyzes the formation of acetyl phosphate from acetate and ATP. Can also catalyze the reverse reaction. The protein is Acetate kinase 2 of Vibrio cholerae serotype O1 (strain ATCC 39315 / El Tor Inaba N16961).